Consider the following 121-residue polypeptide: Small ribosomal subunit protein uS13 (121 aa).

The segment at 96-121 (PVRGQNTKNNARTRKGKAVAIAGKKK) is disordered. The segment covering 106-121 (ARTRKGKAVAIAGKKK) has biased composition (basic residues).

This sequence belongs to the universal ribosomal protein uS13 family. In terms of assembly, part of the 30S ribosomal subunit. Forms a loose heterodimer with protein S19. Forms two bridges to the 50S subunit in the 70S ribosome.

In terms of biological role, located at the top of the head of the 30S subunit, it contacts several helices of the 16S rRNA. In the 70S ribosome it contacts the 23S rRNA (bridge B1a) and protein L5 of the 50S subunit (bridge B1b), connecting the 2 subunits; these bridges are implicated in subunit movement. Contacts the tRNAs in the A and P-sites. This is Small ribosomal subunit protein uS13 from Streptococcus suis (strain 05ZYH33).